Here is a 335-residue protein sequence, read N- to C-terminus: tRNA N6-adenosine threonylcarbamoyltransferase (335 aa).

Residues His110 and His114 each coordinate Fe cation. Substrate contacts are provided by residues 132–136 (LVSGG), Asp165, Gly178, and Asn271. Asp299 serves as a coordination point for Fe cation.

Belongs to the KAE1 / TsaD family. Fe(2+) is required as a cofactor.

The protein resides in the cytoplasm. It carries out the reaction L-threonylcarbamoyladenylate + adenosine(37) in tRNA = N(6)-L-threonylcarbamoyladenosine(37) in tRNA + AMP + H(+). In terms of biological role, required for the formation of a threonylcarbamoyl group on adenosine at position 37 (t(6)A37) in tRNAs that read codons beginning with adenine. Is involved in the transfer of the threonylcarbamoyl moiety of threonylcarbamoyl-AMP (TC-AMP) to the N6 group of A37, together with TsaE and TsaB. TsaD likely plays a direct catalytic role in this reaction. The sequence is that of tRNA N6-adenosine threonylcarbamoyltransferase from Campylobacter jejuni subsp. jejuni serotype O:2 (strain ATCC 700819 / NCTC 11168).